Reading from the N-terminus, the 328-residue chain is Eukaryotic translation initiation factor 3 subunit I (328 aa).

5 WD repeats span residues 8–47 (GHER…RLGT), 50–91 (GHQG…GTIP), 148–187 (SIQT…ELNS), 190–229 (DHTG…CLKT), and 287–328 (GHFG…FVFE).

It belongs to the eIF-3 subunit I family. As to quaternary structure, component of the eukaryotic translation initiation factor 3 (eIF-3) complex.

The protein localises to the cytoplasm. Functionally, component of the eukaryotic translation initiation factor 3 (eIF-3) complex, which is involved in protein synthesis of a specialized repertoire of mRNAs and, together with other initiation factors, stimulates binding of mRNA and methionyl-tRNAi to the 40S ribosome. The eIF-3 complex specifically targets and initiates translation of a subset of mRNAs involved in cell proliferation. In Culex quinquefasciatus (Southern house mosquito), this protein is Eukaryotic translation initiation factor 3 subunit I.